Consider the following 123-residue polypeptide: ATP synthase epsilon chain (123 aa).

Belongs to the ATPase epsilon chain family. F-type ATPases have 2 components, CF(1) - the catalytic core - and CF(0) - the membrane proton channel. CF(1) has five subunits: alpha(3), beta(3), gamma(1), delta(1), epsilon(1). CF(0) has three main subunits: a, b and c.

It localises to the cell membrane. Its function is as follows. Produces ATP from ADP in the presence of a proton gradient across the membrane. In Corynebacterium diphtheriae (strain ATCC 700971 / NCTC 13129 / Biotype gravis), this protein is ATP synthase epsilon chain.